The following is a 121-amino-acid chain: Autophagy-related protein 8 (121 aa).

Gly116 carries the Phosphatidylethanolamine amidated glycine lipid modification. Positions 117 to 121 (DFETA) are cleaved as a propeptide — removed in mature form.

This sequence belongs to the ATG8 family. Post-translationally, the C-terminal 5 residues are removed to expose Gly-116 at the C-terminus. The C-terminal Gly is then amidated with phosphatidylethanolamine by an activating system similar to that for ubiquitin.

The protein localises to the cytoplasmic vesicle. The protein resides in the autophagosome membrane. It localises to the vacuole membrane. Ubiquitin-like modifier involved in autophagosome formation. With cpr-1/atg4, mediates the delivery of the autophagosomes to the vacuole via the microtubule cytoskeleton. Required for selective autophagic degradation of the nucleus (nucleophagy) as well as for mitophagy which contributes to regulate mitochondrial quantity and quality by eliminating the mitochondria to a basal level to fulfill cellular energy requirements and preventing excess ROS production. Also participates in membrane fusion events that take place in the early secretory pathway. Also involved in endoplasmic reticulum-specific autophagic process and is essential for the survival of cells subjected to severe ER stress. The apg-6/atg8-PE conjugate mediates tethering between adjacent membranes and stimulates membrane hemifusion, leading to expansion of the autophagosomal membrane during autophagy. This Neurospora crassa (strain ATCC 24698 / 74-OR23-1A / CBS 708.71 / DSM 1257 / FGSC 987) protein is Autophagy-related protein 8 (apg-6).